Consider the following 309-residue polypeptide: UPF0282 protein Msed_0584 (309 aa).

Belongs to the UPF0282 family.

The protein is UPF0282 protein Msed_0584 of Metallosphaera sedula (strain ATCC 51363 / DSM 5348 / JCM 9185 / NBRC 15509 / TH2).